The chain runs to 131 residues: Small ribosomal subunit protein uS11 (131 aa).

The protein belongs to the universal ribosomal protein uS11 family. As to quaternary structure, part of the 30S ribosomal subunit. Interacts with proteins S7 and S18. Binds to IF-3.

Functionally, located on the platform of the 30S subunit, it bridges several disparate RNA helices of the 16S rRNA. Forms part of the Shine-Dalgarno cleft in the 70S ribosome. The protein is Small ribosomal subunit protein uS11 of Halorhodospira halophila (strain DSM 244 / SL1) (Ectothiorhodospira halophila (strain DSM 244 / SL1)).